Here is a 74-residue protein sequence, read N- to C-terminus: U5-theraphotoxin-Cg1a (74 aa).

The signal sequence occupies residues 1–19 (MNATIFALLLLLNLAMYNA). A propeptide spanning residues 20-39 (AEQSSETDMDDTLLIPENYR) is cleaved from the precursor. 3 disulfide bridges follow: C42-C56, C49-C61, and C55-C71.

It belongs to the neurotoxin 36 family. 01 subfamily. As to expression, expressed by the venom gland.

It is found in the secreted. Functionally, probable ion channel inhibitor. The polypeptide is U5-theraphotoxin-Cg1a (Chilobrachys guangxiensis (Chinese earth tiger tarantula)).